Reading from the N-terminus, the 159-residue chain is Large ribosomal subunit protein mL43 (159 aa).

Residues 123–159 (SPSIQGQWHPFTNKPTALGGLRPREVQNPAPTQRPAQ) form a disordered region.

This sequence belongs to the mitochondrion-specific ribosomal protein mL43 family. Component of the mitochondrial ribosome large subunit (39S) which comprises a 16S rRNA and about 50 distinct proteins.

The protein localises to the mitochondrion. The protein is Large ribosomal subunit protein mL43 (MRPL43) of Bos taurus (Bovine).